Consider the following 956-residue polypeptide: Probable hypoxanthine oxidase XdhD (956 aa).

Residues Q414, F445, and A727 each coordinate Mo-molybdopterin.

It belongs to the xanthine dehydrogenase family. [2Fe-2S] cluster is required as a cofactor. It depends on Mo-molybdopterin as a cofactor.

Functionally, probably has no xanthine dehydrogenase activity; however deletion results in increased adenine sensitivity, suggesting that this protein contributes to the conversion of adenine to guanine nucleotides during purine salvage. This is Probable hypoxanthine oxidase XdhD (xdhD) from Escherichia coli (strain K12).